The primary structure comprises 301 residues: Ribonuclease Z (301 aa).

7 residues coordinate Zn(2+): histidine 60, histidine 62, aspartate 64, histidine 65, histidine 137, aspartate 207, and histidine 265. Catalysis depends on aspartate 64, which acts as the Proton acceptor.

The protein belongs to the RNase Z family. In terms of assembly, homodimer. Zn(2+) serves as cofactor.

The enzyme catalyses Endonucleolytic cleavage of RNA, removing extra 3' nucleotides from tRNA precursor, generating 3' termini of tRNAs. A 3'-hydroxy group is left at the tRNA terminus and a 5'-phosphoryl group is left at the trailer molecule.. In terms of biological role, zinc phosphodiesterase, which displays some tRNA 3'-processing endonuclease activity. Probably involved in tRNA maturation, by removing a 3'-trailer from precursor tRNA. The sequence is that of Ribonuclease Z from Exiguobacterium sibiricum (strain DSM 17290 / CCUG 55495 / CIP 109462 / JCM 13490 / 255-15).